A 184-amino-acid polypeptide reads, in one-letter code: Lysozyme 1 (184 aa).

The first 20 residues, 1–20 (MNGLILFCAVVFATAVCTYG), serve as a signal peptide directing secretion. The region spanning 69–184 (TGMVSQQCLR…WRRVQAQGCN (116 aa)) is the I-type lysozyme domain. 6 cysteine pairs are disulfide-bonded: C76-C152, C81-C87, C92-C101, C114-C134, C124-C130, and C148-C166. E84 serves as the catalytic Proton donor. Catalysis depends on D95, which acts as the Nucleophile. 107–113 (KRAYWID) provides a ligand contact to substrate. Substrate is bound by residues Y138 and 159–161 (HNG).

Hemolymph, labial palps, non-vesiculated cells of mantle connective tissue, cells of interlamellar junctions and epithelia surrounding the water tubes of the gills.

The protein localises to the secreted. It catalyses the reaction Hydrolysis of (1-&gt;4)-beta-linkages between N-acetylmuramic acid and N-acetyl-D-glucosamine residues in a peptidoglycan and between N-acetyl-D-glucosamine residues in chitodextrins.. Functionally, has antibacterial activity against the Gram-positive bacteria L.garvieae, M.luteus and Enterococcus sp., and the Gram-negative bacteria E.coli and V.vulnificus. Weak antibacterial activity against the Gram-negative bacterium A.hydrophila. No antibacterial activity detected against the Gram-positive bacterium S.iniae or against the Gram-negative bacterium E.ictaluri. Shows some chitinase activity but no isopeptidase activity. This Crassostrea virginica (Eastern oyster) protein is Lysozyme 1.